Consider the following 30-residue polypeptide: Non-toxic phospholipase A2 (30 aa).

Residues tyrosine 26, glycine 28, and glycine 30 each coordinate Ca(2+).

The protein belongs to the phospholipase A2 family. Group I subfamily. In terms of assembly, homodimer. It depends on Ca(2+) as a cofactor. Glycosylated. Expressed by the venom gland.

It localises to the secreted. The catalysed reaction is a 1,2-diacyl-sn-glycero-3-phosphocholine + H2O = a 1-acyl-sn-glycero-3-phosphocholine + a fatty acid + H(+). Its activity is regulated as follows. Enzymatic activity is diminished by Cd(2+) and Hg(2+). In terms of biological role, relatively highly potent phospholipase A2 that displays potent antimicrobial and hemolytic activities. It does not show cytotoxic effects on the three human cell lines tested. PLA2 catalyzes the calcium-dependent hydrolysis of the 2-acyl groups in 3-sn-phosphoglycerides. It shows similar potencies on both Gram-negative and Gram-positive bacteria: B.cereus (MIC&gt;9 ug/ml), B.subtilis (MIC&gt;12 ug/ml), E.faecalis (MIC&gt;7 ug/ml), S.epidermidis (MIC&gt;12 ug/ml), S.aureux (MIC&gt;5 ug/ml), E.coli (MIC&gt;7 ug/ml), K.pneumonia (MIC&gt;8 ug/ml), P.aeruginosa (MIC&gt;10 ug/ml), and S.enteric (MIC&gt;9 ug/ml). It also shows antifungal activities: A.niger (MIC&gt;15 ug/ml), B.cinerea (MIC&gt;12 ug/ml), F.solani (MIC&gt;15 ug/ml), and P.digitatum (MIC&gt;10 ug/ml). This chain is Non-toxic phospholipase A2, found in Walterinnesia aegyptia (Desert black snake).